The primary structure comprises 128 residues: Protein Wnt-2b-B (128 aa).

Disulfide bonds link C3/C16 and C5/C11. S8 carries the O-palmitoleoyl serine; by PORCN lipid modification. N-linked (GlcNAc...) asparagine glycosylation is present at N48. 2 disulfides stabilise this stretch: C90–C105 and C127–C128.

The protein belongs to the Wnt family. In terms of processing, palmitoleoylation is required for efficient binding to frizzled receptors. Depalmitoleoylation leads to Wnt signaling pathway inhibition.

Its subcellular location is the secreted. It is found in the extracellular space. It localises to the extracellular matrix. Its function is as follows. Ligand for members of the frizzled family of seven transmembrane receptors. Functions in the canonical Wnt/beta-catenin signaling pathway. The polypeptide is Protein Wnt-2b-B (wnt2b-b) (Xenopus laevis (African clawed frog)).